We begin with the raw amino-acid sequence, 503 residues long: Probable cytosol aminopeptidase (503 aa).

Mn(2+) is bound by residues Lys-270 and Asp-275. Lys-282 is an active-site residue. Positions 293, 352, and 354 each coordinate Mn(2+). Arg-356 is an active-site residue.

The protein belongs to the peptidase M17 family. Mn(2+) is required as a cofactor.

The protein resides in the cytoplasm. The enzyme catalyses Release of an N-terminal amino acid, Xaa-|-Yaa-, in which Xaa is preferably Leu, but may be other amino acids including Pro although not Arg or Lys, and Yaa may be Pro. Amino acid amides and methyl esters are also readily hydrolyzed, but rates on arylamides are exceedingly low.. The catalysed reaction is Release of an N-terminal amino acid, preferentially leucine, but not glutamic or aspartic acids.. Its function is as follows. Presumably involved in the processing and regular turnover of intracellular proteins. Catalyzes the removal of unsubstituted N-terminal amino acids from various peptides. This Escherichia coli O139:H28 (strain E24377A / ETEC) protein is Probable cytosol aminopeptidase.